Reading from the N-terminus, the 946-residue chain is MIGAFARKLFGSSNDRRIKAYQARVAAINALEPDVAALSDEALRARTDQFRAELAAGKTLDDLLIPAFATVREAAKRTLGQRHFDVQLIGGMVLHEGDIAEMKTGEGKTLVATLACYLNALAGKGVHVVTVNDYLASRDAGWMGQIYAFLGMSTGVIVHGLDDSQRQKAYACDITYGTNNEYGFDYLRDNMKYRLEDMAQRGHFFAIVDEVDSILIDEARTPLIISGPLDDRSEFYNTIDTFIPRLDKSDYDVDEKQRSVALTEAGMEKIETLLRDAGQLKGESLYDIENVSVVHHINQALRAHTLFQRDKDYIVRNDEVVIIDEFTGRMMQGRRYSEGLHQALEAKEHVTVQPENQTLASITFQNYFRMYGKLAGMTGTAATEADEFYDIYKLEVVEIPTNVTIARLDEDDEVYRTQTEKYAAILAEVERANKRLQPVLVGTASIEKSEVLADVLLKSGYKQIDFGDPKALEKLYAAARAGKPAKLFAVLNARFHEQEAYIVAEAGVPGAITIATNMAGRGTDIKLGGSLEMRIQQETADITDEAEKAARIEQIKADIERFRQIVLNAEDEVEIEPAKGNKPAKTAKRPGGLYIIGSERHESRRIDNQLRGRSGRQGDPGRSKFFLSLEDDLMRIFGSGKLDTMLTRLGLKEGEAIIHPWINKALEKAQQKVEARNFDIRKNLLKFDDVQNDQRKVIFDQRIELMKEDSVVETVTDMRHTFIEDLVSKHVPEHAYAEQWDVAGLKEELNRVVGLDIPVDEWAKEEGIADEELLVRLEKVFDEHMAAKVAQWGPDVMRYAEKSILLQTLDHLWREHLVMLDHLRQVIGLRGYGQRDPLQEYKSEAFNLFQEMSAHLREAVTAQLMRVEIIPPEQPRELPPMEVHKMDPNTGEDEMQFANVSLAPADTVEKSERDPNRPESWGKVGRNEDCPCGSGKKYKHCHGRYA.

ATP contacts are provided by residues Gln-87, Gly-105–Thr-109, and Asp-524. Disordered regions lie at residues Pro-872–Glu-892 and Pro-904–Ala-946. Residues Thr-907 to Arg-917 show a composition bias toward basic and acidic residues. The Zn(2+) site is built by Cys-930, Cys-932, Cys-941, and His-942. Basic residues predominate over residues Lys-936–Ala-946.

The protein belongs to the SecA family. As to quaternary structure, monomer and homodimer. Part of the essential Sec protein translocation apparatus which comprises SecA, SecYEG and auxiliary proteins SecDF-YajC and YidC. It depends on Zn(2+) as a cofactor.

Its subcellular location is the cell inner membrane. It is found in the cytoplasm. It catalyses the reaction ATP + H2O + cellular proteinSide 1 = ADP + phosphate + cellular proteinSide 2.. Functionally, part of the Sec protein translocase complex. Interacts with the SecYEG preprotein conducting channel. Has a central role in coupling the hydrolysis of ATP to the transfer of proteins into and across the cell membrane, serving both as a receptor for the preprotein-SecB complex and as an ATP-driven molecular motor driving the stepwise translocation of polypeptide chains across the membrane. In Rhodopseudomonas palustris (strain BisB5), this protein is Protein translocase subunit SecA.